The primary structure comprises 327 residues: GTPase Obg (327 aa).

The 159-residue stretch at 2 to 160 folds into the Obg domain; the sequence is HLFKDSLNLI…LNLRLELSLI (159 aa). In terms of domain architecture, OBG-type G spans 161–326; it reads ADIGLVGLPN…LVSEFFSLVK (166 aa). GTP contacts are provided by residues 167 to 174, 192 to 196, 213 to 216, 280 to 283, and 307 to 309; these read GLPNAGKS, FTTKI, DLPG, SKLD, and SIY. Mg(2+) is bound by residues serine 174 and threonine 194.

This sequence belongs to the TRAFAC class OBG-HflX-like GTPase superfamily. OBG GTPase family. As to quaternary structure, monomer. Mg(2+) is required as a cofactor.

Its subcellular location is the cytoplasm. Functionally, an essential GTPase which binds GTP, GDP and possibly (p)ppGpp with moderate affinity, with high nucleotide exchange rates and a fairly low GTP hydrolysis rate. Plays a role in control of the cell cycle, stress response, ribosome biogenesis and in those bacteria that undergo differentiation, in morphogenesis control. This is GTPase Obg from Borrelia duttonii (strain Ly).